The sequence spans 65 residues: Large ribosomal subunit protein bL33 (65 aa).

The disordered stretch occupies residues 19–40 (TVPSSKKRSAGVSRYTTEKNRR).

This sequence belongs to the bacterial ribosomal protein bL33 family.

The polypeptide is Large ribosomal subunit protein bL33 (Prochlorococcus marinus (strain NATL2A)).